We begin with the raw amino-acid sequence, 144 residues long: MLVTYILASVLLFSSVLGQRCSTTWGIRDTNYLIENLKDDPPSKCSCSGNVTSCLCLSVPTDDCTTPCYREGLLQLTNATQKSRLLPVFHRVKRIVEVLKNITCPSFSCEKPCNQTMAGNTLSFLKSLLGTFQKTEMQRQKSRP.

The first 18 residues, 1-18 (MLVTYILASVLLFSSVLG), serve as a signal peptide directing secretion. Pyrrolidone carboxylic acid is present on Q19. N50, N78, N101, and N114 each carry an N-linked (GlcNAc...) asparagine glycan.

The protein belongs to the IL-7/IL-9 family. In terms of assembly, interacts with IL9R. Interacts with IL2RG.

It localises to the secreted. Its function is as follows. Multifunctional cytokine secreted mainly by T-helper 2 lymphocytes and also mast cells or NKT cells that plays important roles in the immune response against parasites. Affects intestinal epithelial permeability and adaptive immunity. In addition, induces the differentiation of specific T-cell subsets such as IL-17 producing helper T-cells (TH17) and also proliferation and differentiation of mast cells. Mechanistically, exerts its biological effects through a receptor composed of IL9R subunit and a signal transducing subunit IL2RG. Receptor stimulation results in the rapid activation of JAK1 and JAK3 kinase activities leading to STAT1, STAT3 and STAT5-mediated transcriptional programs. Induction of differentiation genes seems to be mediated by STAT1 alone, while protection of cells from apoptosis depends on STAT3 and STAT5. This Mus musculus (Mouse) protein is Interleukin-9 (Il9).